The chain runs to 464 residues: Fumarate hydratase class II (464 aa).

Substrate contacts are provided by residues 98 to 100, Arg126, 129 to 132, 139 to 141, and Thr187; these read SGT, HPND, and SSN. His188 (proton donor/acceptor) is an active-site residue. Residue Ser318 is part of the active site. Residues Ser319 and 324-326 each bind substrate; that span reads KVN.

The protein belongs to the class-II fumarase/aspartase family. Fumarase subfamily. Homotetramer.

It localises to the cytoplasm. It catalyses the reaction (S)-malate = fumarate + H2O. Its pathway is carbohydrate metabolism; tricarboxylic acid cycle; (S)-malate from fumarate: step 1/1. Its function is as follows. Involved in the TCA cycle. Catalyzes the stereospecific interconversion of fumarate to L-malate. This is Fumarate hydratase class II from Photorhabdus laumondii subsp. laumondii (strain DSM 15139 / CIP 105565 / TT01) (Photorhabdus luminescens subsp. laumondii).